The following is a 131-amino-acid chain: Protein GLUTAMINE DUMPER 5 (131 aa).

The Extracellular segment spans residues 1–34; sequence MRQFPSIRGNINEKMMTTMVESQTRSPWRTPVPY. A helical transmembrane segment spans residues 35 to 55; that stretch reads LFGGLAAMLGLIAFALLLLAC. Topologically, residues 56–131 are cytoplasmic; sequence SYWRLSRQTE…GESKVTEENH (76 aa). The short motif at 88 to 92 is the VIMAG element; sequence VIMAG.

Belongs to the GLUTAMINE DUMPER 1 (TC 9.B.60) family. In terms of tissue distribution, expressed in the vascular tissues. Also detected in guard cells.

The protein resides in the membrane. In terms of biological role, probable subunit of an amino acid transporter involved in the regulation of the amino acid metabolism. Stimulates amino acid export by activating nonselective amino acid facilitators. This chain is Protein GLUTAMINE DUMPER 5 (GDU5), found in Arabidopsis thaliana (Mouse-ear cress).